Reading from the N-terminus, the 399-residue chain is Putative glutamate--cysteine ligase 2 (399 aa).

The tract at residues 377 to 399 (PAVGSSHGRTDPSRNGGPSHAGA) is disordered.

It belongs to the glutamate--cysteine ligase type 2 family. YbdK subfamily.

The enzyme catalyses L-cysteine + L-glutamate + ATP = gamma-L-glutamyl-L-cysteine + ADP + phosphate + H(+). ATP-dependent carboxylate-amine ligase which exhibits weak glutamate--cysteine ligase activity. This Thermobifida fusca (strain YX) protein is Putative glutamate--cysteine ligase 2.